A 304-amino-acid polypeptide reads, in one-letter code: ATP phosphoribosyltransferase (304 aa).

Belongs to the ATP phosphoribosyltransferase family.

The protein resides in the cytoplasm. It carries out the reaction 1-(5-phospho-beta-D-ribosyl)-ATP + diphosphate = 5-phospho-alpha-D-ribose 1-diphosphate + ATP. It participates in amino-acid biosynthesis; L-histidine biosynthesis; L-histidine from 5-phospho-alpha-D-ribose 1-diphosphate: step 1/9. Functionally, catalyzes the condensation of ATP and 5-phosphoribose 1-diphosphate to form N'-(5'-phosphoribosyl)-ATP (PR-ATP). Has a crucial role in the pathway because the rate of histidine biosynthesis seems to be controlled primarily by regulation of the enzymatic activity. The sequence is that of ATP phosphoribosyltransferase (HIS1) from Debaryomyces hansenii (strain ATCC 36239 / CBS 767 / BCRC 21394 / JCM 1990 / NBRC 0083 / IGC 2968) (Yeast).